Here is a 205-residue protein sequence, read N- to C-terminus: Small heat shock protein hspG12 (205 aa).

One can recognise a sHSP domain in the interval 35-205 (KTIIDILPPM…YSNTIKININ (171 aa)). The disordered stretch occupies residues 99–147 (PSLLDTKEDEASIEEFDEDDIKPKSTETTSTLSNSKENKKDENKSKSTE). Residues 109-118 (ASIEEFDEDD) show a composition bias toward acidic residues. The segment covering 134 to 147 (KENKKDENKSKSTE) has biased composition (basic and acidic residues).

Belongs to the small heat shock protein (HSP20) family.

This is Small heat shock protein hspG12 (hspG12) from Dictyostelium discoideum (Social amoeba).